The sequence spans 170 residues: Lipoprotein signal peptidase (170 aa).

A run of 3 helical transmembrane segments spans residues 9-29 (IGSV…KYLV), 72-92 (LFFL…ILKE), and 93-113 (TNKI…GNII). Catalysis depends on residues Asp124 and Asp146. The helical transmembrane segment at 142–162 (FNFADSYVVIGITLFIIYDLF) threads the bilayer.

Belongs to the peptidase A8 family.

It is found in the cell inner membrane. The enzyme catalyses Release of signal peptides from bacterial membrane prolipoproteins. Hydrolyzes -Xaa-Yaa-Zaa-|-(S,diacylglyceryl)Cys-, in which Xaa is hydrophobic (preferably Leu), and Yaa (Ala or Ser) and Zaa (Gly or Ala) have small, neutral side chains.. Its pathway is protein modification; lipoprotein biosynthesis (signal peptide cleavage). Functionally, this protein specifically catalyzes the removal of signal peptides from prolipoproteins. This chain is Lipoprotein signal peptidase, found in Borrelia hermsii (strain HS1 / DAH).